The sequence spans 708 residues: tRNA(Met) cytidine acetyltransferase TmcA (708 aa).

Residues Q189, 215–224 (GRGKTSALGL), and R357 contribute to the ATP site. The N-acetyltransferase domain maps to 398–574 (PECVEQPERL…YSLLMVRGEH (177 aa)). Residues 502-504 (IAV) and 509-515 (QRQGIGS) contribute to the acetyl-CoA site.

The protein belongs to the RNA cytidine acetyltransferase family. TmcA subfamily.

It localises to the cytoplasm. It carries out the reaction cytidine(34) in elongator tRNA(Met) + acetyl-CoA + ATP + H2O = N(4)-acetylcytidine(34) in elongator tRNA(Met) + ADP + phosphate + CoA + H(+). In terms of biological role, catalyzes the formation of N(4)-acetylcytidine (ac(4)C) at the wobble position of tRNA(Met), by using acetyl-CoA as an acetyl donor and ATP (or GTP). This Vibrio cholerae serotype O1 (strain ATCC 39315 / El Tor Inaba N16961) protein is tRNA(Met) cytidine acetyltransferase TmcA.